The chain runs to 380 residues: Probable inactive reductase easA (380 aa).

FMN is bound by residues 25–27, Ala60, Gln102, and His171; that span reads PMT. Substrate-binding residues include His171 and Asn174. FMN is bound by residues Lys223, Gly299, 324–325, and Arg325; that span reads GR. Tyr352 is a substrate binding site.

This sequence belongs to the NADH:flavin oxidoreductase/NADH oxidase family.

Its function is as follows. Probable inactive dehydrogenase; part of the gene cluster that mediates the biosynthesis of fungal ergot alkaloid ergovaline, the predominant ergopeptine product in E.festucae var. lolii. DmaW catalyzes the first step of ergot alkaloid biosynthesis by condensing dimethylallyl diphosphate (DMAP) and tryptophan to form 4-dimethylallyl-L-tryptophan. The second step is catalyzed by the methyltransferase easF that methylates 4-dimethylallyl-L-tryptophan in the presence of S-adenosyl-L-methionine, resulting in the formation of 4-dimethylallyl-L-abrine. The catalase easC and the FAD-dependent oxidoreductase easE then transform 4-dimethylallyl-L-abrine to chanoclavine-I which is further oxidized by easD in the presence of NAD(+), resulting in the formation of chanoclavine-I aldehyde. Agroclavine dehydrogenase easG then mediates the conversion of chanoclavine-I aldehyde to agroclavine via a non-enzymatic adduct reaction: the substrate is an iminium intermediate that is formed spontaneously from chanoclavine-I aldehyde in the presence of glutathione. The presence of easA is not required to complete this reaction. Further conversion of agroclavine to paspalic acid is a two-step process involving oxidation of agroclavine to elymoclavine and of elymoclavine to paspalic acid, the second step being performed by the elymoclavine oxidase cloA. Paspalic acid is then further converted to D-lysergic acid. Ergovaline is assembled from D-lysergic acid and three different amino acids by the D-lysergyl-peptide-synthetase composed of a monomudular (lpsB) and a trimodular (lpsA) nonribosomal peptide synthetase subunit. This Epichloe festucae var. lolii (Neotyphodium lolii) protein is Probable inactive reductase easA.